A 313-amino-acid polypeptide reads, in one-letter code: ADP-L-glycero-D-manno-heptose-6-epimerase (313 aa).

NADP(+)-binding positions include methionine 10–isoleucine 11, aspartate 31–asparagine 32, lysine 38, arginine 53, glutamate 75–serine 79, and asparagine 92. Residue tyrosine 139 is the Proton acceptor of the active site. Lysine 143 contributes to the NADP(+) binding site. Asparagine 174 serves as a coordination point for substrate. NADP(+)-binding residues include valine 175 and lysine 183. Lysine 183 serves as the catalytic Proton acceptor. Substrate contacts are provided by residues serine 185, histidine 192, phenylalanine 206–serine 209, arginine 214, and tyrosine 277.

The protein belongs to the NAD(P)-dependent epimerase/dehydratase family. HldD subfamily. Homopentamer. NADP(+) serves as cofactor.

The enzyme catalyses ADP-D-glycero-beta-D-manno-heptose = ADP-L-glycero-beta-D-manno-heptose. The protein operates within nucleotide-sugar biosynthesis; ADP-L-glycero-beta-D-manno-heptose biosynthesis; ADP-L-glycero-beta-D-manno-heptose from D-glycero-beta-D-manno-heptose 7-phosphate: step 4/4. It functions in the pathway bacterial outer membrane biogenesis; LPS core biosynthesis. Functionally, catalyzes the interconversion between ADP-D-glycero-beta-D-manno-heptose and ADP-L-glycero-beta-D-manno-heptose via an epimerization at carbon 6 of the heptose. The protein is ADP-L-glycero-D-manno-heptose-6-epimerase of Vibrio vulnificus (strain CMCP6).